Here is a 307-residue protein sequence, read N- to C-terminus: UDP-3-O-acyl-N-acetylglucosamine deacetylase (307 aa).

Residues His-78, His-241, and Asp-245 each coordinate Zn(2+). His-268 acts as the Proton donor in catalysis.

This sequence belongs to the LpxC family. Zn(2+) serves as cofactor.

It carries out the reaction a UDP-3-O-[(3R)-3-hydroxyacyl]-N-acetyl-alpha-D-glucosamine + H2O = a UDP-3-O-[(3R)-3-hydroxyacyl]-alpha-D-glucosamine + acetate. It participates in glycolipid biosynthesis; lipid IV(A) biosynthesis; lipid IV(A) from (3R)-3-hydroxytetradecanoyl-[acyl-carrier-protein] and UDP-N-acetyl-alpha-D-glucosamine: step 2/6. In terms of biological role, catalyzes the hydrolysis of UDP-3-O-myristoyl-N-acetylglucosamine to form UDP-3-O-myristoylglucosamine and acetate, the committed step in lipid A biosynthesis. This Paracidovorax citrulli (strain AAC00-1) (Acidovorax citrulli) protein is UDP-3-O-acyl-N-acetylglucosamine deacetylase.